The chain runs to 56 residues: Small ribosomal subunit protein uS14 (56 aa).

4 residues coordinate Zn(2+): C21, C24, C39, and C42.

It belongs to the universal ribosomal protein uS14 family. As to quaternary structure, component of the 40S small ribosomal subunit. Requires Zn(2+) as cofactor.

The protein resides in the cytoplasm. It is found in the cytosol. The protein localises to the rough endoplasmic reticulum. Its function is as follows. Component of the small ribosomal subunit. The ribosome is a large ribonucleoprotein complex responsible for the synthesis of proteins in the cell. This Hippocampus comes (Tiger tail seahorse) protein is Small ribosomal subunit protein uS14 (rps29).